Consider the following 210-residue polypeptide: Placenta-expressed transcript 1 protein (210 aa).

The signal sequence occupies residues 1-26; the sequence is MAVLGSPLLPLRLFLCFGLLFFSASC. Topologically, residues 27-189 are extracellular; it reads TDHPDQCMIF…THKNSANRVF (163 aa). Asparagine 67 and asparagine 94 each carry an N-linked (GlcNAc...) asparagine glycan. Residues 190-209 traverse the membrane as a helical segment; that stretch reads RSPVRDAIQILLAFLTSKLL. Residue phenylalanine 210 is a topological domain, cytoplasmic.

Highly expressed in placenta.

It localises to the membrane. The protein resides in the apical cell membrane. Modulates leading keratinocyte migration and cellular adhesion to matrix proteins during a wound-healing response and promotes wound repair. May play a role during trichilemmal differentiation of the hair follicle. The sequence is that of Placenta-expressed transcript 1 protein (PLET1) from Sus scrofa (Pig).